The sequence spans 239 residues: Pyridoxine 5'-phosphate synthase (239 aa).

Residue Asn-7 coordinates 3-amino-2-oxopropyl phosphate. 9–10 (DH) is a binding site for 1-deoxy-D-xylulose 5-phosphate. Arg-18 contacts 3-amino-2-oxopropyl phosphate. His-43 (proton acceptor) is an active-site residue. 1-deoxy-D-xylulose 5-phosphate is bound by residues Arg-45 and His-50. Glu-70 functions as the Proton acceptor in the catalytic mechanism. Thr-100 serves as a coordination point for 1-deoxy-D-xylulose 5-phosphate. The active-site Proton donor is the His-191. Residues Gly-192 and 213 to 214 (GH) each bind 3-amino-2-oxopropyl phosphate.

This sequence belongs to the PNP synthase family. As to quaternary structure, homooctamer; tetramer of dimers.

Its subcellular location is the cytoplasm. The enzyme catalyses 3-amino-2-oxopropyl phosphate + 1-deoxy-D-xylulose 5-phosphate = pyridoxine 5'-phosphate + phosphate + 2 H2O + H(+). It participates in cofactor biosynthesis; pyridoxine 5'-phosphate biosynthesis; pyridoxine 5'-phosphate from D-erythrose 4-phosphate: step 5/5. Functionally, catalyzes the complicated ring closure reaction between the two acyclic compounds 1-deoxy-D-xylulose-5-phosphate (DXP) and 3-amino-2-oxopropyl phosphate (1-amino-acetone-3-phosphate or AAP) to form pyridoxine 5'-phosphate (PNP) and inorganic phosphate. The chain is Pyridoxine 5'-phosphate synthase from Geotalea uraniireducens (strain Rf4) (Geobacter uraniireducens).